The chain runs to 188 residues: Nicotinamide-nucleotide adenylyltransferase (188 aa).

This sequence belongs to the archaeal NMN adenylyltransferase family.

It localises to the cytoplasm. It catalyses the reaction beta-nicotinamide D-ribonucleotide + ATP + H(+) = diphosphate + NAD(+). It functions in the pathway cofactor biosynthesis; NAD(+) biosynthesis; NAD(+) from nicotinamide D-ribonucleotide: step 1/1. This chain is Nicotinamide-nucleotide adenylyltransferase, found in Thermococcus kodakarensis (strain ATCC BAA-918 / JCM 12380 / KOD1) (Pyrococcus kodakaraensis (strain KOD1)).